Consider the following 354-residue polypeptide: Chorismate synthase (354 aa).

Arginine 46 is a binding site for NADP(+). Residues 123 to 125, 239 to 240, glycine 284, 299 to 303, and arginine 325 each bind FMN; these read RSS, NA, and KPVAT.

Belongs to the chorismate synthase family. As to quaternary structure, homotetramer. FMNH2 is required as a cofactor.

It carries out the reaction 5-O-(1-carboxyvinyl)-3-phosphoshikimate = chorismate + phosphate. It functions in the pathway metabolic intermediate biosynthesis; chorismate biosynthesis; chorismate from D-erythrose 4-phosphate and phosphoenolpyruvate: step 7/7. Functionally, catalyzes the anti-1,4-elimination of the C-3 phosphate and the C-6 proR hydrogen from 5-enolpyruvylshikimate-3-phosphate (EPSP) to yield chorismate, which is the branch point compound that serves as the starting substrate for the three terminal pathways of aromatic amino acid biosynthesis. This reaction introduces a second double bond into the aromatic ring system. This chain is Chorismate synthase, found in Azobacteroides pseudotrichonymphae genomovar. CFP2.